The sequence spans 227 residues: Prolactin (227 aa).

The first 28 residues, 1–28, serve as a signal peptide directing secretion; it reads MNIKGSPWKGSLLLLLVSNLLLCQSVAP. Cysteines 32 and 39 form a disulfide. Ser-54 is subject to Phosphoserine. N-linked (GlcNAc...) asparagine; partial glycosylation occurs at Asn-59. Phosphoserine occurs at positions 62, 118, 163, and 194. Disulfide bonds link Cys-86–Cys-202 and Cys-219–Cys-227.

The protein belongs to the somatotropin/prolactin family. In terms of assembly, interacts with PRLR.

Its subcellular location is the secreted. Prolactin acts primarily on the mammary gland by promoting lactation. This chain is Prolactin (PRL), found in Homo sapiens (Human).